The sequence spans 429 residues: UDP-N-acetylglucosamine 1-carboxyvinyltransferase 2 (429 aa).

Residue 22–23 (KN) coordinates phosphoenolpyruvate. Arg-93 serves as a coordination point for UDP-N-acetyl-alpha-D-glucosamine. Cys-117 serves as the catalytic Proton donor. 2-(S-cysteinyl)pyruvic acid O-phosphothioketal is present on Cys-117. UDP-N-acetyl-alpha-D-glucosamine is bound by residues 122–126 (RPIDQ), Asp-305, and Ile-327.

Belongs to the EPSP synthase family. MurA subfamily.

It is found in the cytoplasm. The enzyme catalyses phosphoenolpyruvate + UDP-N-acetyl-alpha-D-glucosamine = UDP-N-acetyl-3-O-(1-carboxyvinyl)-alpha-D-glucosamine + phosphate. It functions in the pathway cell wall biogenesis; peptidoglycan biosynthesis. Cell wall formation. Adds enolpyruvyl to UDP-N-acetylglucosamine. This is UDP-N-acetylglucosamine 1-carboxyvinyltransferase 2 from Bacillus anthracis.